The primary structure comprises 125 residues: Holo-[acyl-carrier-protein] synthase (125 aa).

D8 and E57 together coordinate Mg(2+).

The protein belongs to the P-Pant transferase superfamily. AcpS family. Requires Mg(2+) as cofactor.

The protein resides in the cytoplasm. It carries out the reaction apo-[ACP] + CoA = holo-[ACP] + adenosine 3',5'-bisphosphate + H(+). Functionally, transfers the 4'-phosphopantetheine moiety from coenzyme A to a Ser of acyl-carrier-protein. In Laribacter hongkongensis (strain HLHK9), this protein is Holo-[acyl-carrier-protein] synthase.